A 119-amino-acid polypeptide reads, in one-letter code: Flagellar transcriptional regulator FlhD (119 aa).

This sequence belongs to the FlhD family. In terms of assembly, homodimer; disulfide-linked. Forms a heterohexamer composed of two FlhC and four FlhD subunits. Each FlhC binds a FlhD dimer, forming a heterotrimer, and a hexamer assembles by dimerization of two heterotrimers.

It is found in the cytoplasm. Its function is as follows. Functions in complex with FlhC as a master transcriptional regulator that regulates transcription of several flagellar and non-flagellar operons by binding to their promoter region. Activates expression of class 2 flagellar genes, including fliA, which is a flagellum-specific sigma factor that turns on the class 3 genes. Also regulates genes whose products function in a variety of physiological pathways. The sequence is that of Flagellar transcriptional regulator FlhD from Enterobacter sp. (strain 638).